The primary structure comprises 866 residues: Primer-independent DNA polymerase PolB (866 aa).

An exonuclease domain region spans residues 50–286; that stretch reads SDLTLHIGFD…DRVPATIGAM (237 aa). The segment at 287–385 is palm1 domain; the sequence is AVSRFTKTLK…GLLDILTPDY (99 aa). Residues 386-481 are TPR1 domain; the sequence is GNIRLSKNPD…NSESTSVFLP (96 aa). Residues 482 to 522 form a fingers domain region; that stretch reads FVQQVRENRNRHIKGSLEEKFWKEIGNSLYGKLAQGLRAKT. Residues 523–549 are TPR2 domain; that stretch reads AFDTARGLNRSLPPSSVTQPFFAAHVT. The palm2 domain stretch occupies residues 550–678; sequence GFIRAVVGEL…PGQTLSRSTL (129 aa). A thumb domain region spans residues 679 to 866; it reads ISTREMWLSE…RKYPTFCLPV (188 aa).

Requires Mn(2+) as cofactor.

The catalysed reaction is DNA(n) + a 2'-deoxyribonucleoside 5'-triphosphate = DNA(n+1) + diphosphate. Its function is as follows. DNA polymerase with primer-independent templated DNA polymerization activity, primer-dependent DNA polymerization activity with strand displacement, translesion synthesis activity across non-bulky base damage, 3'-5' exodeoxyribonuclease activity, and de novo primer synthesis activity. The enzyme is processive and faithful. Translation synthesis across abasic sites is coupled to de novo primer synthesis. Overexpression of wild-type protein increases survival of cells upon mitomycin C or UV treatment. In Escherichia coli, this protein is Primer-independent DNA polymerase PolB (pi-polB).